The chain runs to 475 residues: Putative UDP-glucose glucosyltransferase (475 aa).

It belongs to the UDP-glycosyltransferase family.

This Fragaria ananassa (Strawberry) protein is Putative UDP-glucose glucosyltransferase.